Here is a 206-residue protein sequence, read N- to C-terminus: Transmembrane emp24 domain-containing protein bai (206 aa).

Positions 1–20 are cleaved as a signal peptide; sequence MLKSLLCILLIFGCLCRIHG. Residues 21–172 lie on the Lumenal side of the membrane; it reads VMFHLTPNTQ…RDTNEKTNSR (152 aa). Positions 30–140 constitute a GOLD domain; it reads QKCLKEDIQA…LKPLEVDLKR (111 aa). A helical transmembrane segment spans residues 173-193; sequence VLFFSIFSMCCLLGLATWQVL. Residues 194 to 206 are Cytoplasmic-facing; the sequence is YLRRYFKAKKLIE.

This sequence belongs to the EMP24/GP25L family.

The protein localises to the membrane. Its function is as follows. Eca and bai are essential, though not redundant, for dorsoventral patterning of the embryo. Specifically required during early embryogenesis for the activity of maternal tkv, while the zygotic tkv is not affected. The protein is Transmembrane emp24 domain-containing protein bai of Drosophila grimshawi (Hawaiian fruit fly).